We begin with the raw amino-acid sequence, 298 residues long: Lipoyl synthase (298 aa).

The [4Fe-4S] cluster site is built by C40, C45, C51, C67, C71, C74, and S280. The Radical SAM core domain maps to 53 to 269 (AVRKTATFMI…KEIALSKGFS (217 aa)).

This sequence belongs to the radical SAM superfamily. Lipoyl synthase family. [4Fe-4S] cluster is required as a cofactor.

It localises to the cytoplasm. The catalysed reaction is [[Fe-S] cluster scaffold protein carrying a second [4Fe-4S](2+) cluster] + N(6)-octanoyl-L-lysyl-[protein] + 2 oxidized [2Fe-2S]-[ferredoxin] + 2 S-adenosyl-L-methionine + 4 H(+) = [[Fe-S] cluster scaffold protein] + N(6)-[(R)-dihydrolipoyl]-L-lysyl-[protein] + 4 Fe(3+) + 2 hydrogen sulfide + 2 5'-deoxyadenosine + 2 L-methionine + 2 reduced [2Fe-2S]-[ferredoxin]. Its pathway is protein modification; protein lipoylation via endogenous pathway; protein N(6)-(lipoyl)lysine from octanoyl-[acyl-carrier-protein]. Functionally, catalyzes the radical-mediated insertion of two sulfur atoms into the C-6 and C-8 positions of the octanoyl moiety bound to the lipoyl domains of lipoate-dependent enzymes, thereby converting the octanoylated domains into lipoylated derivatives. This Bacillus cereus (strain ATCC 10987 / NRS 248) protein is Lipoyl synthase.